The chain runs to 75 residues: Mating pheromone Er-1/Er-3 (75 aa).

Positions 1–19 are cleaved as a signal peptide; it reads MNKLAILAIIAMVLFSANA. A propeptide spanning residues 20 to 35 is cleaved from the precursor; sequence FRFQSRLRSNVEAKTG. Intrachain disulfides connect C38–C54, C45–C71, and C50–C63.

Homodimer.

The protein localises to the secreted. It localises to the cell membrane. Functionally, mating ciliate pheromones (or gamones) are diffusible extracellular communication signals that distinguish different intraspecific classes of cells commonly referred to as 'mating types'. They prepare the latter for conjugation by changing their cell surface properties. The membrane-bound form promotes inter-cellular communication and adhesion for mating pair formation and may act as binding site for the secreted form. The sequence is that of Mating pheromone Er-1/Er-3 (MAT1) from Euplotes raikovi.